We begin with the raw amino-acid sequence, 351 residues long: Protein RecA (351 aa).

68–75 (GPESSGKT) serves as a coordination point for ATP.

The protein belongs to the RecA family.

The protein localises to the cytoplasm. Functionally, can catalyze the hydrolysis of ATP in the presence of single-stranded DNA, the ATP-dependent uptake of single-stranded DNA by duplex DNA, and the ATP-dependent hybridization of homologous single-stranded DNAs. It interacts with LexA causing its activation and leading to its autocatalytic cleavage. The polypeptide is Protein RecA (Thermotoga neapolitana (strain ATCC 49049 / DSM 4359 / NBRC 107923 / NS-E)).